Consider the following 897-residue polypeptide: Transportin-2 (897 aa).

20 HEAT repeats span residues G9–K36, F41–Q79, F88–L121, L127–D164, N171–M201, F214–L241, H253–T280, V296–V386, H394–A422, P434–R461, L475–A508, L516–V549, E557–Q595, E603–G654, I665–F696, A704–G737, Q745–P790, Q798–N831, I840–V871, and D874–F894. Residues V31–D99 form the Importin N-terminal domain. Residues A325 to D364 are disordered. A compositionally biased stretch (acidic residues) spans S355 to D364. Residue K862 is modified to N6-acetyllysine.

It belongs to the importin beta family. Importin beta-2 subfamily.

It is found in the cytoplasm. The protein resides in the nucleus. Functionally, probably functions in nuclear protein import as nuclear transport receptor. Serves as receptor for nuclear localization signals (NLS) in cargo substrates. Is thought to mediate docking of the importin/substrate complex to the nuclear pore complex (NPC) through binding to nucleoporin and the complex is subsequently translocated through the pore by an energy requiring, Ran-dependent mechanism. At the nucleoplasmic side of the NPC, Ran binds to the importin, the importin/substrate complex dissociates and importin is re-exported from the nucleus to the cytoplasm where GTP hydrolysis releases Ran. The directionality of nuclear import is thought to be conferred by an asymmetric distribution of the GTP- and GDP-bound forms of Ran between the cytoplasm and nucleus. This Homo sapiens (Human) protein is Transportin-2 (TNPO2).